A 516-amino-acid chain; its full sequence is MSDEESIKTRLKLRPVAIDTYRENVAYLHRECSVYRAEGFQALAKIRVGCNGKQIEAVLNVVDDVCIVAPDELGLSEQAFQRFGEPAGQLVNVAQAEPPLSMDGVRRKIGGERLDYGDYQAITSDIAKGRYSKMEMAAFLVATGQNGLDRDEVLSLTRAMLETGVRLSWNEPLVADKHCIGGIPGNRTSLLIVPIVAAHGMLIPKTSSRAITSPAGTADTMEVLARTDLAPESLDRLVRMERGCLAWGGTTRLAPVDDMLISVERPLGIDSQGQMVASILSKKLAAGATHLLLDIPVGPTAKVRQMRDAMSLRKLFEYVGDRVGLHLEAVITDGAQPVGRGIGPVLEVRDVMQVLENDPEAPVDLREKSLRLAGRILEFDPDVRGGFGYSIARDILESGRALAKMHRIIDAQGRQERRLEPGRLVFEVRAERAGVVVGIDNFFLAQTARLAGAPMSRGAGVDLLNKLGDTVEEGQPLYRVYAEFPANFEFAREFTRTRSGYNIGDAAFLTKTHMEF.

Belongs to the thymidine/pyrimidine-nucleoside phosphorylase family. Type 2 subfamily.

It carries out the reaction thymidine + phosphate = 2-deoxy-alpha-D-ribose 1-phosphate + thymine. The chain is Putative thymidine phosphorylase from Methylococcus capsulatus (strain ATCC 33009 / NCIMB 11132 / Bath).